The following is a 518-amino-acid chain: Arrestin-related trafficking adapter 10 (518 aa).

Residue Lys-118 forms a Glycyl lysine isopeptide (Lys-Gly) (interchain with G-Cter in ubiquitin) linkage.

Belongs to the ART10 family. In terms of assembly, interacts with RSP5. Ubiquitinated by RSP5.

The protein localises to the cytoplasm. May regulate endocytosis by recruiting RSP5 ubiquitin ligase activity to specific plasma membrane proteins in response to extracellular stimuli. This chain is Arrestin-related trafficking adapter 10 (ART10), found in Saccharomyces cerevisiae (strain ATCC 204508 / S288c) (Baker's yeast).